The chain runs to 120 residues: UPF0231 protein YacL (120 aa).

It belongs to the UPF0231 family.

The chain is UPF0231 protein YacL from Escherichia coli O81 (strain ED1a).